The chain runs to 195 residues: dITP/XTP pyrophosphatase (195 aa).

Position 8–13 (8–13 (SNNQGK)) interacts with substrate. Mg(2+) is bound by residues E39 and D68. Residue D68 is the Proton acceptor of the active site. Substrate-binding positions include S69, 149 to 152 (FGYD), K172, and 177 to 178 (HR).

The protein belongs to the HAM1 NTPase family. Homodimer. The cofactor is Mg(2+).

The enzyme catalyses XTP + H2O = XMP + diphosphate + H(+). It carries out the reaction dITP + H2O = dIMP + diphosphate + H(+). It catalyses the reaction ITP + H2O = IMP + diphosphate + H(+). Functionally, pyrophosphatase that catalyzes the hydrolysis of nucleoside triphosphates to their monophosphate derivatives, with a high preference for the non-canonical purine nucleotides XTP (xanthosine triphosphate), dITP (deoxyinosine triphosphate) and ITP. Seems to function as a house-cleaning enzyme that removes non-canonical purine nucleotides from the nucleotide pool, thus preventing their incorporation into DNA/RNA and avoiding chromosomal lesions. This is dITP/XTP pyrophosphatase from Staphylococcus aureus (strain COL).